A 99-amino-acid chain; its full sequence is Aspartyl/glutamyl-tRNA(Asn/Gln) amidotransferase subunit C (99 aa).

It belongs to the GatC family. As to quaternary structure, heterotrimer of A, B and C subunits.

It carries out the reaction L-glutamyl-tRNA(Gln) + L-glutamine + ATP + H2O = L-glutaminyl-tRNA(Gln) + L-glutamate + ADP + phosphate + H(+). The enzyme catalyses L-aspartyl-tRNA(Asn) + L-glutamine + ATP + H2O = L-asparaginyl-tRNA(Asn) + L-glutamate + ADP + phosphate + 2 H(+). In terms of biological role, allows the formation of correctly charged Asn-tRNA(Asn) or Gln-tRNA(Gln) through the transamidation of misacylated Asp-tRNA(Asn) or Glu-tRNA(Gln) in organisms which lack either or both of asparaginyl-tRNA or glutaminyl-tRNA synthetases. The reaction takes place in the presence of glutamine and ATP through an activated phospho-Asp-tRNA(Asn) or phospho-Glu-tRNA(Gln). The protein is Aspartyl/glutamyl-tRNA(Asn/Gln) amidotransferase subunit C of Cupriavidus necator (strain ATCC 17699 / DSM 428 / KCTC 22496 / NCIMB 10442 / H16 / Stanier 337) (Ralstonia eutropha).